The chain runs to 383 residues: Na(+)/H(+) antiporter NhaA (383 aa).

The next 11 membrane-spanning stretches (helical) occupy residues 21 to 41 (AAGVMLMAASAIGMVFANSIW), 56 to 76 (LTMRGWINDALMALFFLLAGL), 94 to 114 (LLPGVAAIGGMVVPAIIYVAF), 123 to 143 (GWAIPTATDIAFALGVLALAG), 152 to 172 (VFLTALAIVDDLGAVIVIALF), 175 to 195 (GTLSVLPGAGVAAILGLLLML), 202 to 222 (TLFPYLLAGVPLWWLTLKSGI), 258 to 278 (FVILPLFGFANAGISLHGVTV), 287 to 307 (LGVGAALMLGKPLGVLGAVSI), 326 to 346 (IGIAFLCGIGFTMSLFIAILA), and 355 to 375 (QIKLGILSGSMLSGLCGYILL).

The protein belongs to the NhaA Na(+)/H(+) (TC 2.A.33) antiporter family.

Its subcellular location is the cell inner membrane. It catalyses the reaction Na(+)(in) + 2 H(+)(out) = Na(+)(out) + 2 H(+)(in). Na(+)/H(+) antiporter that extrudes sodium in exchange for external protons. This is Na(+)/H(+) antiporter NhaA from Granulibacter bethesdensis (strain ATCC BAA-1260 / CGDNIH1).